A 376-amino-acid chain; its full sequence is Queuine tRNA-ribosyltransferase (376 aa).

The active-site Proton acceptor is aspartate 90. Residues aspartate 90–phenylalanine 94, aspartate 144, glutamine 193, and glycine 220 contribute to the substrate site. The segment at glycine 251 to aspartate 257 is RNA binding. Residue aspartate 270 is the Nucleophile of the active site. The interval threonine 275 to arginine 279 is RNA binding; important for wobble base 34 recognition. Positions 308, 310, 313, and 339 each coordinate Zn(2+).

This sequence belongs to the queuine tRNA-ribosyltransferase family. Homodimer. Within each dimer, one monomer is responsible for RNA recognition and catalysis, while the other monomer binds to the replacement base PreQ1. Zn(2+) is required as a cofactor.

It carries out the reaction 7-aminomethyl-7-carbaguanine + guanosine(34) in tRNA = 7-aminomethyl-7-carbaguanosine(34) in tRNA + guanine. The protein operates within tRNA modification; tRNA-queuosine biosynthesis. Functionally, catalyzes the base-exchange of a guanine (G) residue with the queuine precursor 7-aminomethyl-7-deazaguanine (PreQ1) at position 34 (anticodon wobble position) in tRNAs with GU(N) anticodons (tRNA-Asp, -Asn, -His and -Tyr). Catalysis occurs through a double-displacement mechanism. The nucleophile active site attacks the C1' of nucleotide 34 to detach the guanine base from the RNA, forming a covalent enzyme-RNA intermediate. The proton acceptor active site deprotonates the incoming PreQ1, allowing a nucleophilic attack on the C1' of the ribose to form the product. After dissociation, two additional enzymatic reactions on the tRNA convert PreQ1 to queuine (Q), resulting in the hypermodified nucleoside queuosine (7-(((4,5-cis-dihydroxy-2-cyclopenten-1-yl)amino)methyl)-7-deazaguanosine). The chain is Queuine tRNA-ribosyltransferase from Campylobacter concisus (strain 13826).